Consider the following 403-residue polypeptide: Homoserine O-succinyltransferase (403 aa).

An AB hydrolase-1 domain is found at 58–366 (NAVLICHALS…ESNHGHDAFL (309 aa)). S164 functions as the Nucleophile in the catalytic mechanism. R234 serves as a coordination point for substrate. Catalysis depends on residues D329 and H362. D363 contributes to the substrate binding site.

This sequence belongs to the AB hydrolase superfamily. MetX family. Homodimer.

It is found in the cytoplasm. The enzyme catalyses L-homoserine + succinyl-CoA = O-succinyl-L-homoserine + CoA. The protein operates within amino-acid biosynthesis; L-methionine biosynthesis via de novo pathway; O-succinyl-L-homoserine from L-homoserine: step 1/1. Transfers a succinyl group from succinyl-CoA to L-homoserine, forming succinyl-L-homoserine. The chain is Homoserine O-succinyltransferase from Halothiobacillus neapolitanus (strain ATCC 23641 / c2) (Thiobacillus neapolitanus).